Consider the following 31-residue polypeptide: Photosystem I reaction center subunit XII (31 aa).

The helical transmembrane segment at 7–26 threads the bilayer; the sequence is QVFLALIIALIPGILADRLG.

Belongs to the PsaM family.

The protein localises to the plastid. It is found in the chloroplast thylakoid membrane. This is Photosystem I reaction center subunit XII from Euglena deses.